The chain runs to 131 residues: MKKHGVLNSEIASILASLGHTDTIVIADCGLPIPDGVKRIDLAVEIGKPSFLDVLQVVADDMAIEKVTLAEEVINNNAEINKEIELKLVEPALEYVSHEQFKEHTKKAKAIIRTGEATPYANVILHAGVIF.

The active-site Proton donor is histidine 20. Substrate-binding positions include aspartate 28, histidine 98, and 120–122 (YAN).

Belongs to the RbsD / FucU family. RbsD subfamily. Homodecamer.

The protein localises to the cytoplasm. It carries out the reaction beta-D-ribopyranose = beta-D-ribofuranose. Its pathway is carbohydrate metabolism; D-ribose degradation; D-ribose 5-phosphate from beta-D-ribopyranose: step 1/2. In terms of biological role, catalyzes the interconversion of beta-pyran and beta-furan forms of D-ribose. In Bacillus cereus (strain ATCC 10987 / NRS 248), this protein is D-ribose pyranase.